A 384-amino-acid chain; its full sequence is DNA replication and repair protein RecF (384 aa).

43 to 50 (GENGSGKT) lines the ATP pocket.

Belongs to the RecF family.

It is found in the cytoplasm. Functionally, the RecF protein is involved in DNA metabolism; it is required for DNA replication and normal SOS inducibility. RecF binds preferentially to single-stranded, linear DNA. It also seems to bind ATP. This Brucella suis biovar 1 (strain 1330) protein is DNA replication and repair protein RecF.